Here is a 1136-residue protein sequence, read N- to C-terminus: Tyrosine-protein kinase receptor Tie-1 (1136 aa).

The N-terminal stretch at 1-23 is a signal peptide; sequence MVWLEPPLLLPIFFLASHVGAAV. Topologically, residues 24-757 are extracellular; that stretch reads DLTLLADLRL…IHAAEEGLDQ (734 aa). In terms of domain architecture, Ig-like C2-type 1 spans 43–106; it reads CVSGEAGAGR…PSDLVGVFSC (64 aa). Residues asparagine 84 and asparagine 159 are each glycosylated (N-linked (GlcNAc...) asparagine). EGF-like domains follow at residues 212-254, 256-301, and 303-343; these read GCEA…TRCE, ACRE…SQCQ, and ACAP…MHCE. Cystine bridges form between cysteine 226/cysteine 235, cysteine 229/cysteine 242, and cysteine 244/cysteine 253. Disulfide bonds link cysteine 317–cysteine 325, cysteine 319–cysteine 331, and cysteine 333–cysteine 342. The Ig-like C2-type 2 domain occupies 370–424; the sequence is CAAAGNPFPVRGSMELRKPDGTVLLSTKAIVEPDRTTAEFEVPRLALGDSGLWEC. Fibronectin type-III domains follow at residues 444–543, 546–640, and 644–737; these read PPVP…CPEP, KPWL…LPPS, and APRH…TLGN. N-linked (GlcNAc...) asparagine glycans are attached at residues asparagine 501, asparagine 594, and asparagine 707. Residues 758–782 traverse the membrane as a helical segment; the sequence is QLVLAVVGSVSATCLTILAALLTLA. Topologically, residues 783–1136 are cytoplasmic; that stretch reads CIRKSCLHRR…AGIDATAEEA (354 aa). The Protein kinase domain occupies 837 to 1116; that stretch reads ITFEDLIGEG…RMLEARKAYV (280 aa). ATP is bound by residues 843-851 and lysine 868; that span reads IGEGNFGQV. Aspartate 977 acts as the Proton acceptor in catalysis. A Phosphotyrosine; by autocatalysis modification is found at tyrosine 1005.

This sequence belongs to the protein kinase superfamily. Tyr protein kinase family. Tie subfamily. As to quaternary structure, heterodimer with TEK/TIE2. Interacts with SVEP1 (via C-terminus). Post-translationally, phosphorylated on tyrosine residues in response to ANGPT1, most likely by TEK/TIE2. In terms of tissue distribution, specifically expressed in developing vascular endothelial cells.

The protein resides in the cell membrane. The catalysed reaction is L-tyrosyl-[protein] + ATP = O-phospho-L-tyrosyl-[protein] + ADP + H(+). Transmembrane tyrosine-protein kinase that may modulate TEK/TIE2 activity and contribute to the regulation of angiogenesis. This is Tyrosine-protein kinase receptor Tie-1 (TIE1) from Bos taurus (Bovine).